We begin with the raw amino-acid sequence, 196 residues long: GTP cyclohydrolase 1 (196 aa).

C86, H89, and C158 together coordinate Zn(2+).

The protein belongs to the GTP cyclohydrolase I family. As to quaternary structure, toroid-shaped homodecamer, composed of two pentamers of five dimers.

The catalysed reaction is GTP + H2O = 7,8-dihydroneopterin 3'-triphosphate + formate + H(+). It participates in cofactor biosynthesis; 7,8-dihydroneopterin triphosphate biosynthesis; 7,8-dihydroneopterin triphosphate from GTP: step 1/1. This is GTP cyclohydrolase 1 from Clostridium botulinum (strain Langeland / NCTC 10281 / Type F).